Here is a 95-residue protein sequence, read N- to C-terminus: uncharacterized protein (95 aa).

Positions 1–19 are cleaved as a signal peptide; the sequence is MAILMLSLQLILLLIPSIS. N-linked (GlcNAc...) asparagine glycans are attached at residues asparagine 38 and asparagine 41.

Its subcellular location is the secreted. This is an uncharacterized protein from Homo sapiens (Human).